Here is a 267-residue protein sequence, read N- to C-terminus: 3-methyl-2-oxobutanoate hydroxymethyltransferase (267 aa).

Residues Asp-45 and Asp-84 each coordinate Mg(2+). 3-methyl-2-oxobutanoate is bound by residues 45–46, Asp-84, and Lys-113; that span reads DS. Glu-115 lines the Mg(2+) pocket. The Proton acceptor role is filled by Glu-182.

It belongs to the PanB family. As to quaternary structure, homodecamer; pentamer of dimers. Requires Mg(2+) as cofactor.

The protein resides in the cytoplasm. The enzyme catalyses 3-methyl-2-oxobutanoate + (6R)-5,10-methylene-5,6,7,8-tetrahydrofolate + H2O = 2-dehydropantoate + (6S)-5,6,7,8-tetrahydrofolate. The protein operates within cofactor biosynthesis; coenzyme A biosynthesis. Functionally, catalyzes the reversible reaction in which hydroxymethyl group from 5,10-methylenetetrahydrofolate is transferred onto alpha-ketoisovalerate to form ketopantoate. This is 3-methyl-2-oxobutanoate hydroxymethyltransferase from Saccharolobus islandicus (strain Y.N.15.51 / Yellowstone #2) (Sulfolobus islandicus).